Consider the following 470-residue polypeptide: FAD-dependent monooxygenase SAT7 (470 aa).

The chain crosses the membrane as a helical span at residues 28–48 (GLSVAIVGGGIVGIALALGLV). Residues E58, A71, and R143 each coordinate FAD. Active-site residues include R227 and Y260. FAD-binding residues include D351 and A364.

The protein belongs to the paxM FAD-dependent monooxygenase family. Requires FAD as cofactor.

It is found in the membrane. The protein operates within mycotoxin biosynthesis. In terms of biological role, FAD-dependent monooxygenase; part of the satratoxin SC1 cluster involved in the biosynthesis of satratoxins, trichothecene mycotoxins that are associated with human food poisonings. Satratoxins are suggested to be made by products of multiple gene clusters (SC1, SC2 and SC3) that encode 21 proteins in all, including polyketide synthases, acetyltransferases, and other enzymes expected to modify the trichothecene skeleton. SC1 encodes 10 proteins, SAT1 to SAT10. The largest are SAT8, which encodes a putative polyketide synthase (PKS) with a conventional non-reducing architecture, and SAT10, a putative protein containing four ankyrin repeats and thus may be involved in protein scaffolding. The putative short-chain reductase SAT3 may assist the PKS in some capacity. SAT6 contains a secretory lipase domain and acts probably as a trichothecene esterase. SAT5 encodes a putative acetyltransferase, and so, with SAT6, may affect endogenous protection from toxicity. The probable transcription factor SAT9 may regulate the expression of the SC1 cluster. SC2 encodes proteins SAT11 to SAT16, the largest of which encodes the putative reducing PKS SAT13. SAT11 is a cytochrome P450 monooxygenase, while SAT14 and SAT16 are probable acetyltransferases. The SC2 cluster may be regulated by the transcription factor SAT15. SC3 is a small cluster that encodes 5 proteins, SAT17 to SAT21. SAT21 is a putative MFS-type transporter which may have a role in exporting secondary metabolites. The four other proteins putatively encoded in SC3 include the taurine hydroxylase-like protein SAT17, the O-methyltransferase SAT18, the acetyltransferase SAT19, and the Cys6-type zinc finger SAT20, the latter being probably involved in regulation of SC3 expression. The polypeptide is FAD-dependent monooxygenase SAT7 (Stachybotrys chartarum (strain CBS 109288 / IBT 7711) (Toxic black mold)).